We begin with the raw amino-acid sequence, 2931 residues long: Probable polyketide synthase 9/36 (2931 aa).

The 432-residue stretch at glutamate 11–glutamate 442 folds into the Ketosynthase family 3 (KS3) domain. Active-site for beta-ketoacyl synthase activity residues include cysteine 181, histidine 323, and histidine 362. The segment at glycine 635–tyrosine 668 is acyl/malonyl transferase. The active-site For acyl/malonyl transferase activity is serine 645. The tract at residues isoleucine 925–asparagine 1047 is N-terminal hotdog fold. Positions isoleucine 925 to serine 1209 constitute a PKS/mFAS DH domain. Catalysis depends on histidine 959, which acts as the Proton acceptor; for dehydratase activity. Residues asparagine 1064–serine 1209 form a C-terminal hotdog fold region. The Proton donor; for dehydratase activity role is filled by aspartate 1122. A helical transmembrane segment spans residues leucine 2293–threonine 2313. The region spanning threonine 2429–leucine 2506 is the Carrier domain. Serine 2466 carries the O-(pantetheine 4'-phosphoryl)serine modification. Residues lysine 2553 to valine 2573 form a helical membrane-spanning segment.

Requires pantetheine 4'-phosphate as cofactor.

The protein localises to the membrane. Functionally, probable polyketide synthase. The polypeptide is Probable polyketide synthase 9/36 (pks9) (Dictyostelium discoideum (Social amoeba)).